Reading from the N-terminus, the 64-residue chain is Purotoxin-2 (64 aa).

Residues 1 to 44 (AKACTPLLHDCSHDRHSCCRGDMFKYVCDCFYPEGEDKTEVCSC) form a knottin domain region. Disulfide bonds link C4–C19, C11–C28, C18–C44, and C30–C42. Positions 45 to 64 (QQPKSHKIAEKIIDKAKTTL) are linear cationic cytotoxin domain. L64 bears the Leucine amide mark.

The protein belongs to the neurotoxin 19 (CSTX) family. 05 (U4-Lctx) subfamily. Post-translationally, amidation at Leu-64 is not mandatory for activity on P2RX3. In terms of tissue distribution, expressed by the venom gland.

The protein resides in the secreted. Its function is as follows. Enhances the high-affinity desensitization of human P2RX3 purinoceptors. At 50 nM, the toxin decreases the IC(50) for ambient ATP from 2.67 nM to 0.77 nM in human P2RX3. In Alopecosa marikovskyi (Wolf spider), this protein is Purotoxin-2.